The sequence spans 900 residues: Serine-rich coiled-coil domain-containing protein 1 (900 aa).

Disordered stretches follow at residues 1 to 100 (MGDS…HSNM) and 156 to 178 (KSEG…QSTR). Over residues 29–56 (LPSSPSSSNTVGVHSSSPSSTNSSSGST) the composition is skewed to low complexity. The segment covering 81 to 100 (EPTNQNLSISNGAQPGHSNM) has biased composition (polar residues). The stretch at 673 to 707 (MKDECSMLKLQLKEKDELISQLQEELGKVRHLQKA) forms a coiled coil.

It belongs to the CCSER family.

The polypeptide is Serine-rich coiled-coil domain-containing protein 1 (CCSER1) (Homo sapiens (Human)).